The chain runs to 469 residues: DNA polymerase delta subunit 2 (469 aa).

Met-1 carries the post-translational modification N-acetylmethionine. Ser-257 carries the phosphoserine modification.

This sequence belongs to the DNA polymerase delta/II small subunit family. Component of both the DNA polymerase delta and DNA polymerase zeta complexes. Component of the tetrameric DNA polymerase delta complex (Pol-delta4), which consists of POLD1/p125, POLD2/p50, POLD3/p66/p68 and POLD4/p12, with POLD1 bearing DNA polymerase and 3' to 5' proofreading exonuclease activities. Within Pol-delta4, directly interacts with POLD1, POLD3 and POLD4. Following stress caused by DNA damaging agents or by replication stress, POLD4 is degraded and Pol-delta4 is converted into a trimeric form of the complex (Pol-delta3), which consists of POLD1, POLD2 and POLD3. Pol-delta3 is the major form occurring at S phase replication sites, as well as DNA damage sites. Also observed as a dimeric complex with POLD2 (Pol-delta2 complex). Pol-delta2 is relatively insensitive to the PCNA stimulation (2-5-fold) compared to Pol-delta4 that is stimulated by over 50-fold. Contrary to the other components of Pol-delta4, does not directly interact with PCNA. As POLD1 and POLD4, directly interacts with WRNIP1; this interaction stimulates DNA polymerase delta-mediated DNA synthesis, independently of the presence of PCNA. This stimulation may be due predominantly to an increase of initiation frequency and also to increased processivity. Directly interacts with POLDIP2 and POLDIP3. Directly interacts with KCTD13/PDIP1; in the presence of PCNA, this interaction may stimulate DNA polymerase activity. Component of the tetrameric Pol-zeta complex (Pol-zeta4), which consists of REV3L, MAD2L2, POLD2 and POLD3, with REV3L bearing DNA polymerase catalytic activity. Interacts with KCTD10.

Its subcellular location is the nucleus. Its function is as follows. Accessory component of both the DNA polymerase delta complex and the DNA polymerase zeta complex. As a component of the trimeric and tetrameric DNA polymerase delta complexes (Pol-delta3 and Pol-delta4, respectively), plays a role in high fidelity genome replication, including in lagging strand synthesis, and repair. Pol-delta3 and Pol-delta4 are characterized by the absence or the presence of POLD4. They exhibit differences in catalytic activity. Most notably, Pol-delta3 shows higher proofreading activity than Pol-delta4. Although both Pol-delta3 and Pol-delta4 process Okazaki fragments in vitro, Pol-delta3 may also be better suited to fulfill this task, exhibiting near-absence of strand displacement activity compared to Pol-delta4 and stalling on encounter with the 5'-blocking oligonucleotides. Pol-delta3 idling process may avoid the formation of a gap, while maintaining a nick that can be readily ligated. Along with DNA polymerase kappa, DNA polymerase delta carries out approximately half of nucleotide excision repair (NER) synthesis following UV irradiation. Under conditions of DNA replication stress, required for the repair of broken replication forks through break-induced replication (BIR). Involved in the translesion synthesis (TLS) of templates carrying O6-methylguanine or abasic sites performed by Pol-delta4, independently of DNA polymerase zeta (REV3L) or eta (POLH). Facilitates abasic site bypass by DNA polymerase delta by promoting extension from the nucleotide inserted opposite the lesion. Also involved in TLS as a component of the DNA polymerase zeta complex. Along with POLD3, dramatically increases the efficiency and processivity of DNA synthesis of the DNA polymerase zeta complex compared to the minimal zeta complex, consisting of only REV3L and REV7. The protein is DNA polymerase delta subunit 2 (Pold2) of Mus musculus (Mouse).